We begin with the raw amino-acid sequence, 280 residues long: Elongation factor 1-delta (280 aa).

Ala-2 is subject to N-acetylalanine. Lys-17 carries the N6-acetyllysine modification. Ser-37, Ser-44, Ser-60, Ser-86, and Ser-106 each carry phosphoserine. Lys-107 bears the N6-acetyllysine mark. Positions Ser-113–Thr-171 are disordered. Lys-117 bears the N6-acetyllysine; alternate mark. Residue Lys-117 is modified to N6-succinyllysine; alternate. Ser-119 is subject to Phosphoserine. Residue Thr-129 is modified to Phosphothreonine. A Phosphoserine modification is found at Ser-133. Thr-147 is subject to Phosphothreonine. Positions Thr-149–Lys-168 are enriched in acidic residues. Ser-162 is subject to Phosphoserine; by CK2.

The protein belongs to the EF-1-beta/EF-1-delta family. In terms of assembly, EF-1 is composed of 4 subunits: alpha, beta, delta, and gamma.

Functionally, EF-1-beta and EF-1-delta stimulate the exchange of GDP bound to EF-1-alpha to GTP. The protein is Elongation factor 1-delta (EEF1D) of Bos taurus (Bovine).